Consider the following 514-residue polypeptide: Protein farnesyltransferase subunit beta (514 aa).

Positions 1–13 (MRHHTKNLRRRAI) are enriched in basic residues. The disordered stretch occupies residues 1–56 (MRHHTKNLRRRAIFLRTTPRGNMDSSSSVATSTSSSSNHRLVRSSEGSPSAGGDDI). Over residues 25 to 39 (SSSSVATSTSSSSNH) the composition is skewed to low complexity. 5 PFTB repeats span residues 180 to 221 (AESL…AVVG), 231 to 272 (RRAL…SLLN), 293 to 334 (FTGL…SLLG), 346 to 388 (IERL…PLIE), and 410 to 454 (REGL…SSAQ). (2E,6E)-farnesyl diphosphate-binding positions include 319–322 (HGAY) and 367–370 (RTNK). Aspartate 373 and cysteine 375 together coordinate Zn(2+). 376–379 (YSHW) contacts (2E,6E)-farnesyl diphosphate. Histidine 442 contacts Zn(2+).

This sequence belongs to the protein prenyltransferase subunit beta family. In terms of assembly, heterodimer of an alpha and a beta subunit. Interacts with RAS1 and RAS2. The cofactor is Zn(2+). In terms of tissue distribution, highly expressed in mycelium, conidium, conidial germination, early formed appressorium and the late infection hypha.

Its subcellular location is the cytoplasm. It carries out the reaction L-cysteinyl-[protein] + (2E,6E)-farnesyl diphosphate = S-(2E,6E)-farnesyl-L-cysteinyl-[protein] + diphosphate. Functionally, catalyzes the transfer of a farnesyl moiety from farnesyl diphosphate to a cysteine at the fourth position from the C-terminus of several proteins having the C-terminal sequence Cys-aliphatic-aliphatic-X. The beta subunit is responsible for peptide-binding. The sequence is that of Protein farnesyltransferase subunit beta (RAM1) from Pyricularia oryzae (strain 70-15 / ATCC MYA-4617 / FGSC 8958) (Rice blast fungus).